Reading from the N-terminus, the 303-residue chain is MRLRHVVSSLDLTRDDYFRIFELADKFSNVKKLNYLSGKVVSLAFFEPSTRTAQSFHTAAIKLGADVIGFASEESTSIAKGENLADTIRMLNNYSNCIVMRHKFDGAALFASEISDIPIINAGDGKHEHPTQALIDLYTIYKVFGEIDGRTFGLLGDLKYARTVNSLLRALTRFKPKKVFLISPSQLKVRREILDGLNYPVIETENPYDVIQDIDVLYVTRIQKERFVDEVEYEKVKESYVVDLKLVNMMKKDGIILHPLPRVTEIDRKVDKTTNAKYFYQASLAVPLRMALFYEVLGERKDD.

Residues arginine 51 and threonine 52 each contribute to the carbamoyl phosphate site. An L-aspartate-binding site is contributed by lysine 80. Carbamoyl phosphate is bound by residues arginine 101, histidine 129, and glutamine 132. Positions 162 and 221 each coordinate L-aspartate. The carbamoyl phosphate site is built by leucine 260 and proline 261.

The protein belongs to the aspartate/ornithine carbamoyltransferase superfamily. ATCase family. In terms of assembly, heterooligomer of catalytic and regulatory chains.

The catalysed reaction is carbamoyl phosphate + L-aspartate = N-carbamoyl-L-aspartate + phosphate + H(+). Its pathway is pyrimidine metabolism; UMP biosynthesis via de novo pathway; (S)-dihydroorotate from bicarbonate: step 2/3. Catalyzes the condensation of carbamoyl phosphate and aspartate to form carbamoyl aspartate and inorganic phosphate, the committed step in the de novo pyrimidine nucleotide biosynthesis pathway. The chain is Aspartate carbamoyltransferase catalytic subunit from Saccharolobus islandicus (strain M.16.4 / Kamchatka #3) (Sulfolobus islandicus).